Consider the following 445-residue polypeptide: Methylenetetrahydrofolate--tRNA-(uracil-5-)-methyltransferase TrmFO (445 aa).

An FAD-binding site is contributed by 9–14 (GGGLAG).

It belongs to the MnmG family. TrmFO subfamily. It depends on FAD as a cofactor.

It is found in the cytoplasm. It catalyses the reaction uridine(54) in tRNA + (6R)-5,10-methylene-5,6,7,8-tetrahydrofolate + NADH + H(+) = 5-methyluridine(54) in tRNA + (6S)-5,6,7,8-tetrahydrofolate + NAD(+). It carries out the reaction uridine(54) in tRNA + (6R)-5,10-methylene-5,6,7,8-tetrahydrofolate + NADPH + H(+) = 5-methyluridine(54) in tRNA + (6S)-5,6,7,8-tetrahydrofolate + NADP(+). Functionally, catalyzes the folate-dependent formation of 5-methyl-uridine at position 54 (M-5-U54) in all tRNAs. This chain is Methylenetetrahydrofolate--tRNA-(uracil-5-)-methyltransferase TrmFO, found in Rhizorhabdus wittichii (strain DSM 6014 / CCUG 31198 / JCM 15750 / NBRC 105917 / EY 4224 / RW1) (Sphingomonas wittichii).